A 283-amino-acid chain; its full sequence is Nucleoid occlusion protein (283 aa).

Residues 148 to 167 (EALAQRLGKGQSTIANKLRL) constitute a DNA-binding region (H-T-H motif).

The protein belongs to the ParB family.

Its subcellular location is the cytoplasm. It localises to the nucleoid. Functionally, effects nucleoid occlusion by binding relatively nonspecifically to DNA and preventing the assembly of the division machinery in the vicinity of the nucleoid, especially under conditions that disturb the cell cycle. It helps to coordinate cell division and chromosome segregation by preventing the formation of the Z ring through the nucleoid, which would cause chromosome breakage. The sequence is that of Nucleoid occlusion protein from Bacillus licheniformis (strain ATCC 14580 / DSM 13 / JCM 2505 / CCUG 7422 / NBRC 12200 / NCIMB 9375 / NCTC 10341 / NRRL NRS-1264 / Gibson 46).